The primary structure comprises 302 residues: tRNA pseudouridine synthase B (302 aa).

Asp45 serves as the catalytic Nucleophile.

Belongs to the pseudouridine synthase TruB family. Type 1 subfamily.

The catalysed reaction is uridine(55) in tRNA = pseudouridine(55) in tRNA. Its function is as follows. Responsible for synthesis of pseudouridine from uracil-55 in the psi GC loop of transfer RNAs. This is tRNA pseudouridine synthase B from Francisella tularensis subsp. tularensis (strain WY96-3418).